The following is a 329-amino-acid chain: DNA-directed RNA polymerase subunit alpha (329 aa).

The interval 1–235 (MQGSVTEFLK…EQLEAFVDLR (235 aa)) is alpha N-terminal domain (alpha-NTD). Residues 249–329 (FDPILLRPVD…NWPPASIADE (81 aa)) form an alpha C-terminal domain (alpha-CTD) region.

Belongs to the RNA polymerase alpha chain family. As to quaternary structure, homodimer. The RNAP catalytic core consists of 2 alpha, 1 beta, 1 beta' and 1 omega subunit. When a sigma factor is associated with the core the holoenzyme is formed, which can initiate transcription.

It carries out the reaction RNA(n) + a ribonucleoside 5'-triphosphate = RNA(n+1) + diphosphate. DNA-dependent RNA polymerase catalyzes the transcription of DNA into RNA using the four ribonucleoside triphosphates as substrates. The sequence is that of DNA-directed RNA polymerase subunit alpha from Sodalis glossinidius (strain morsitans).